The following is a 595-amino-acid chain: Aspartate--tRNA(Asp/Asn) ligase (595 aa).

Glutamate 175 is a binding site for L-aspartate. Residues glutamine 199–lysine 202 are aspartate. L-aspartate-binding residues include arginine 221 and histidine 454. Arginine 221–glutamate 223 contributes to the ATP binding site. Glutamate 488 contacts ATP. Arginine 495 serves as a coordination point for L-aspartate. Glycine 540–arginine 543 contributes to the ATP binding site.

This sequence belongs to the class-II aminoacyl-tRNA synthetase family. Type 1 subfamily. As to quaternary structure, homodimer.

It is found in the cytoplasm. It catalyses the reaction tRNA(Asx) + L-aspartate + ATP = L-aspartyl-tRNA(Asx) + AMP + diphosphate. Functionally, aspartyl-tRNA synthetase with relaxed tRNA specificity since it is able to aspartylate not only its cognate tRNA(Asp) but also tRNA(Asn). Reaction proceeds in two steps: L-aspartate is first activated by ATP to form Asp-AMP and then transferred to the acceptor end of tRNA(Asp/Asn). This chain is Aspartate--tRNA(Asp/Asn) ligase, found in Rhizobium meliloti (strain 1021) (Ensifer meliloti).